The primary structure comprises 119 residues: Large ribosomal subunit protein uL22 (119 aa).

The protein belongs to the universal ribosomal protein uL22 family. Part of the 50S ribosomal subunit.

This protein binds specifically to 23S rRNA; its binding is stimulated by other ribosomal proteins, e.g. L4, L17, and L20. It is important during the early stages of 50S assembly. It makes multiple contacts with different domains of the 23S rRNA in the assembled 50S subunit and ribosome. Its function is as follows. The globular domain of the protein is located near the polypeptide exit tunnel on the outside of the subunit, while an extended beta-hairpin is found that lines the wall of the exit tunnel in the center of the 70S ribosome. This is Large ribosomal subunit protein uL22 from Microcystis aeruginosa (strain NIES-843 / IAM M-2473).